Here is a 227-residue protein sequence, read N- to C-terminus: Cytochrome c oxidase subunit 2 (227 aa).

Residues 1–14 are Mitochondrial intermembrane-facing; the sequence is MAYPMQLGLQDATS. The helical transmembrane segment at 15 to 45 threads the bilayer; the sequence is PIMEELLHFHDHTLMIVFLISSLVLYIISLM. Residues 46 to 59 lie on the Mitochondrial matrix side of the membrane; that stretch reads LTTKLTHTSTMDAQ. A helical transmembrane segment spans residues 60–87; it reads EVETIWTILPAIILIMIALPSLRILYMM. Topologically, residues 88-227 are mitochondrial intermembrane; it reads DEINNPSLTV…HFEKWSASML (140 aa). Residues H161, C196, E198, C200, H204, and M207 each coordinate Cu cation. E198 is a Mg(2+) binding site.

Belongs to the cytochrome c oxidase subunit 2 family. Component of the cytochrome c oxidase (complex IV, CIV), a multisubunit enzyme composed of 14 subunits. The complex is composed of a catalytic core of 3 subunits MT-CO1, MT-CO2 and MT-CO3, encoded in the mitochondrial DNA, and 11 supernumerary subunits COX4I, COX5A, COX5B, COX6A, COX6B, COX6C, COX7A, COX7B, COX7C, COX8 and NDUFA4, which are encoded in the nuclear genome. The complex exists as a monomer or a dimer and forms supercomplexes (SCs) in the inner mitochondrial membrane with NADH-ubiquinone oxidoreductase (complex I, CI) and ubiquinol-cytochrome c oxidoreductase (cytochrome b-c1 complex, complex III, CIII), resulting in different assemblies (supercomplex SCI(1)III(2)IV(1) and megacomplex MCI(2)III(2)IV(2)). Found in a complex with TMEM177, COA6, COX18, COX20, SCO1 and SCO2. Interacts with TMEM177 in a COX20-dependent manner. Interacts with COX20. Interacts with COX16. Cu cation serves as cofactor.

It localises to the mitochondrion inner membrane. The catalysed reaction is 4 Fe(II)-[cytochrome c] + O2 + 8 H(+)(in) = 4 Fe(III)-[cytochrome c] + 2 H2O + 4 H(+)(out). Its function is as follows. Component of the cytochrome c oxidase, the last enzyme in the mitochondrial electron transport chain which drives oxidative phosphorylation. The respiratory chain contains 3 multisubunit complexes succinate dehydrogenase (complex II, CII), ubiquinol-cytochrome c oxidoreductase (cytochrome b-c1 complex, complex III, CIII) and cytochrome c oxidase (complex IV, CIV), that cooperate to transfer electrons derived from NADH and succinate to molecular oxygen, creating an electrochemical gradient over the inner membrane that drives transmembrane transport and the ATP synthase. Cytochrome c oxidase is the component of the respiratory chain that catalyzes the reduction of oxygen to water. Electrons originating from reduced cytochrome c in the intermembrane space (IMS) are transferred via the dinuclear copper A center (CU(A)) of subunit 2 and heme A of subunit 1 to the active site in subunit 1, a binuclear center (BNC) formed by heme A3 and copper B (CU(B)). The BNC reduces molecular oxygen to 2 water molecules using 4 electrons from cytochrome c in the IMS and 4 protons from the mitochondrial matrix. This chain is Cytochrome c oxidase subunit 2 (MT-CO2), found in Damaliscus pygargus phillipsi (Blesbok).